Here is a 349-residue protein sequence, read N- to C-terminus: Isopentenyl-diphosphate delta-isomerase (349 aa).

9–10 (RK) is a binding site for substrate. FMN is bound by residues 65-67 (AMT), serine 95, and asparagine 124. Residue 95 to 97 (STH) participates in substrate binding. Substrate is bound at residue glutamine 154. Mg(2+) is bound at residue glutamate 155. FMN is bound by residues lysine 186, serine 211, threonine 216, 262-264 (GLR), and 283-284 (SR).

This sequence belongs to the IPP isomerase type 2 family. In terms of assembly, homooctamer. Dimer of tetramers. FMN serves as cofactor. Requires NADPH as cofactor. It depends on Mg(2+) as a cofactor.

It is found in the cytoplasm. The enzyme catalyses isopentenyl diphosphate = dimethylallyl diphosphate. Involved in the biosynthesis of isoprenoids. Catalyzes the 1,3-allylic rearrangement of the homoallylic substrate isopentenyl (IPP) to its allylic isomer, dimethylallyl diphosphate (DMAPP). This Staphylococcus aureus (strain JH1) protein is Isopentenyl-diphosphate delta-isomerase.